The primary structure comprises 349 residues: Ribosomal RNA small subunit methyltransferase H (349 aa).

S-adenosyl-L-methionine is bound by residues 34–36 (GGH), aspartate 54, phenylalanine 81, aspartate 102, and glutamine 109.

It belongs to the methyltransferase superfamily. RsmH family.

It is found in the cytoplasm. It carries out the reaction cytidine(1402) in 16S rRNA + S-adenosyl-L-methionine = N(4)-methylcytidine(1402) in 16S rRNA + S-adenosyl-L-homocysteine + H(+). Specifically methylates the N4 position of cytidine in position 1402 (C1402) of 16S rRNA. The protein is Ribosomal RNA small subunit methyltransferase H of Dehalococcoides mccartyi (strain ATCC BAA-2266 / KCTC 15142 / 195) (Dehalococcoides ethenogenes (strain 195)).